The chain runs to 263 residues: Triosephosphate isomerase (263 aa).

10–12 (NWK) is a substrate binding site. Residue H104 is the Electrophile of the active site. Catalysis depends on E176, which acts as the Proton acceptor. Substrate-binding positions include G182, S221, and 242–243 (GG).

Belongs to the triosephosphate isomerase family. Homodimer.

It localises to the cytoplasm. The enzyme catalyses D-glyceraldehyde 3-phosphate = dihydroxyacetone phosphate. It functions in the pathway carbohydrate biosynthesis; gluconeogenesis. It participates in carbohydrate degradation; glycolysis; D-glyceraldehyde 3-phosphate from glycerone phosphate: step 1/1. In terms of biological role, involved in the gluconeogenesis. Catalyzes stereospecifically the conversion of dihydroxyacetone phosphate (DHAP) to D-glyceraldehyde-3-phosphate (G3P). This is Triosephosphate isomerase from Haemophilus influenzae (strain 86-028NP).